Consider the following 230-residue polypeptide: Ribosomal RNA large subunit methyltransferase E (230 aa).

Residues 1 to 13 (MSGSGGKGGGRGG) show a composition bias toward gly residues. Residues 1–22 (MSGSGGKGGGRGGLHVRVKTAK) form a disordered region. Residues glycine 81, tryptophan 83, aspartate 100, aspartate 116, and aspartate 140 each coordinate S-adenosyl-L-methionine. Lysine 180 functions as the Proton acceptor in the catalytic mechanism.

This sequence belongs to the class I-like SAM-binding methyltransferase superfamily. RNA methyltransferase RlmE family.

It localises to the cytoplasm. It catalyses the reaction uridine(2552) in 23S rRNA + S-adenosyl-L-methionine = 2'-O-methyluridine(2552) in 23S rRNA + S-adenosyl-L-homocysteine + H(+). Its function is as follows. Specifically methylates the uridine in position 2552 of 23S rRNA at the 2'-O position of the ribose in the fully assembled 50S ribosomal subunit. The chain is Ribosomal RNA large subunit methyltransferase E from Sphingopyxis alaskensis (strain DSM 13593 / LMG 18877 / RB2256) (Sphingomonas alaskensis).